A 452-amino-acid polypeptide reads, in one-letter code: tRNA modification GTPase MnmE (452 aa).

(6S)-5-formyl-5,6,7,8-tetrahydrofolate is bound by residues Arg-21, Glu-78, and Lys-118. Residues 214–375 (GMKVVIAGRP…LREHLKKSMG (162 aa)) enclose the TrmE-type G domain. Asn-224 lines the K(+) pocket. GTP-binding positions include 224–229 (NAGKSS), 243–249 (TNIAGTT), and 268–271 (DTAG). A Mg(2+)-binding site is contributed by Ser-228. Residues Thr-243, Ile-245, and Thr-248 each contribute to the K(+) site. Thr-249 lines the Mg(2+) pocket. (6S)-5-formyl-5,6,7,8-tetrahydrofolate is bound at residue Lys-452.

It belongs to the TRAFAC class TrmE-Era-EngA-EngB-Septin-like GTPase superfamily. TrmE GTPase family. As to quaternary structure, homodimer. Heterotetramer of two MnmE and two MnmG subunits. K(+) is required as a cofactor.

Its subcellular location is the cytoplasm. Exhibits a very high intrinsic GTPase hydrolysis rate. Involved in the addition of a carboxymethylaminomethyl (cmnm) group at the wobble position (U34) of certain tRNAs, forming tRNA-cmnm(5)s(2)U34. The chain is tRNA modification GTPase MnmE from Actinobacillus pleuropneumoniae serotype 3 (strain JL03).